The primary structure comprises 362 residues: Heat-inducible transcription repressor HrcA (362 aa).

The protein belongs to the HrcA family.

Functionally, negative regulator of class I heat shock genes (grpE-dnaK-dnaJ and groELS operons). Prevents heat-shock induction of these operons. This Nitrobacter winogradskyi (strain ATCC 25391 / DSM 10237 / CIP 104748 / NCIMB 11846 / Nb-255) protein is Heat-inducible transcription repressor HrcA.